We begin with the raw amino-acid sequence, 291 residues long: F-box protein PP2-A12 (291 aa).

An F-box domain is found at 25–71 (KPGLGDLPEACVAIIVENLDPVEICRFSKLNRAFRGASWADCVWESK).

This chain is F-box protein PP2-A12 (P2A12), found in Arabidopsis thaliana (Mouse-ear cress).